The following is a 121-amino-acid chain: MARIAGVDLPRDKQIVIALTYIFGIGNTTAVKVLADAGVPTDVRTRDLTPDQEDKIRAALDTVKVEGDLRREVSLNIKRLQEIGSYRGMRHRRGLPVRGQNTKNNARTRKGKKVSIAGKKK.

Residues 89–121 (MRHRRGLPVRGQNTKNNARTRKGKKVSIAGKKK) are disordered. The span at 106–121 (ARTRKGKKVSIAGKKK) shows a compositional bias: basic residues.

Belongs to the universal ribosomal protein uS13 family. As to quaternary structure, part of the 30S ribosomal subunit. Forms a loose heterodimer with protein S19. Forms two bridges to the 50S subunit in the 70S ribosome.

Located at the top of the head of the 30S subunit, it contacts several helices of the 16S rRNA. In the 70S ribosome it contacts the 23S rRNA (bridge B1a) and protein L5 of the 50S subunit (bridge B1b), connecting the 2 subunits; these bridges are implicated in subunit movement. Contacts the tRNAs in the A and P-sites. The chain is Small ribosomal subunit protein uS13 from Latilactobacillus sakei subsp. sakei (strain 23K) (Lactobacillus sakei subsp. sakei).